The sequence spans 382 residues: Succinyl-diaminopimelate desuccinylase (382 aa).

Histidine 73 contributes to the Zn(2+) binding site. Aspartate 75 is a catalytic residue. Zn(2+) is bound at residue aspartate 106. Glutamate 140 functions as the Proton acceptor in the catalytic mechanism. Zn(2+) is bound by residues glutamate 141, glutamate 169, and histidine 355.

Belongs to the peptidase M20A family. DapE subfamily. As to quaternary structure, homodimer. The cofactor is Zn(2+). Co(2+) serves as cofactor.

The enzyme catalyses N-succinyl-(2S,6S)-2,6-diaminopimelate + H2O = (2S,6S)-2,6-diaminopimelate + succinate. It functions in the pathway amino-acid biosynthesis; L-lysine biosynthesis via DAP pathway; LL-2,6-diaminopimelate from (S)-tetrahydrodipicolinate (succinylase route): step 3/3. Functionally, catalyzes the hydrolysis of N-succinyl-L,L-diaminopimelic acid (SDAP), forming succinate and LL-2,6-diaminopimelate (DAP), an intermediate involved in the bacterial biosynthesis of lysine and meso-diaminopimelic acid, an essential component of bacterial cell walls. In Cellvibrio japonicus (strain Ueda107) (Pseudomonas fluorescens subsp. cellulosa), this protein is Succinyl-diaminopimelate desuccinylase.